The following is an 874-amino-acid chain: Alanine--tRNA ligase (874 aa).

Residues His-563, His-567, Cys-665, and His-669 each coordinate Zn(2+).

The protein belongs to the class-II aminoacyl-tRNA synthetase family. Requires Zn(2+) as cofactor.

The protein localises to the cytoplasm. It carries out the reaction tRNA(Ala) + L-alanine + ATP = L-alanyl-tRNA(Ala) + AMP + diphosphate. Its function is as follows. Catalyzes the attachment of alanine to tRNA(Ala) in a two-step reaction: alanine is first activated by ATP to form Ala-AMP and then transferred to the acceptor end of tRNA(Ala). Also edits incorrectly charged Ser-tRNA(Ala) and Gly-tRNA(Ala) via its editing domain. This Histophilus somni (strain 2336) (Haemophilus somnus) protein is Alanine--tRNA ligase.